Here is a 151-residue protein sequence, read N- to C-terminus: Probable cellulase Cel12b (151 aa).

Catalysis depends on residues Glu-50 and Glu-133.

This sequence belongs to the glycosyl hydrolase 12 (cellulase H) family.

Probable cellulase. Can hydrolyze barley beta-glucan in vitro. Could be important for the survival of M.tuberculosis in the environment, perhaps in amoebal hosts. The sequence is that of Probable cellulase Cel12b from Mycobacterium tuberculosis (strain ATCC 25618 / H37Rv).